The sequence spans 264 residues: Glutamate racemase (264 aa).

Substrate contacts are provided by residues 10–11 and 42–43; these read DS and YG. Cysteine 73 serves as the catalytic Proton donor/acceptor. 74 to 75 is a substrate binding site; it reads NT. The active-site Proton donor/acceptor is cysteine 183. Residue 184-185 coordinates substrate; sequence TH.

It belongs to the aspartate/glutamate racemases family.

It carries out the reaction L-glutamate = D-glutamate. It functions in the pathway cell wall biogenesis; peptidoglycan biosynthesis. Functionally, provides the (R)-glutamate required for cell wall biosynthesis. This chain is Glutamate racemase, found in Streptococcus pyogenes serotype M3 (strain ATCC BAA-595 / MGAS315).